We begin with the raw amino-acid sequence, 509 residues long: Sulfoacetate--CoA ligase (509 aa).

Residues Ala-320–Gly-340 form a disordered region.

The protein belongs to the ATP-dependent AMP-binding enzyme family.

Its subcellular location is the cytoplasm. It carries out the reaction sulfoacetate + ATP + CoA = sulfoacetyl-CoA + AMP + diphosphate. Its function is as follows. Involved in the degradation of sulfoacetate, a widespread natural product. Catalyzes the CoA- and ATP-dependent conversion of sulfoacetate to sulfoacetyl-CoA and AMP. This Cupriavidus necator (strain ATCC 17699 / DSM 428 / KCTC 22496 / NCIMB 10442 / H16 / Stanier 337) (Ralstonia eutropha) protein is Sulfoacetate--CoA ligase.